The following is a 248-amino-acid chain: 26.2 kDa heat shock protein, mitochondrial (248 aa).

Residues 1–32 constitute a mitochondrion transit peptide; that stretch reads MASTVALKGRPLATLLRQLLAADAPPAATGRP. The segment at 26–48 is disordered; that stretch reads PAATGRPVAAAPAASGKPVTAPA. In terms of domain architecture, sHSP spans 139–248; that stretch reads ATAAARRGGW…RKDVFQVNVE (110 aa).

The protein belongs to the small heat shock protein (HSP20) family. May form oligomeric structures.

The protein resides in the mitochondrion. The sequence is that of 26.2 kDa heat shock protein, mitochondrial (HSP26.2) from Oryza sativa subsp. japonica (Rice).